The primary structure comprises 199 residues: Peroxiredoxin-1 (199 aa).

Residues 6-165 form the Thioredoxin domain; sequence AFIGKPAPDF…TLRLVQAFQF (160 aa). The Cysteine sulfenic acid (-SOH) intermediate role is filled by cysteine 52.

It belongs to the peroxiredoxin family. AhpC/Prx1 subfamily. In terms of assembly, homodimer; disulfide-linked, upon oxidation. 5 homodimers assemble to form a ring-like decamer. Interacts with GDPD5; forms a mixed-disulfide with GDPD5. Interacts with SESN1 and SESN2. Post-translationally, the enzyme can be inactivated by further oxidation of the cysteine sulfenic acid (C(P)-SOH) to sulphinic acid (C(P)-SO2H) instead of its condensation to a disulfide bond. It can be reactivated by forming a transient disulfide bond with sulfiredoxin SRXN1, which reduces the cysteine sulfinic acid in an ATP- and Mg-dependent manner.

It is found in the cytoplasm. The catalysed reaction is a hydroperoxide + [thioredoxin]-dithiol = an alcohol + [thioredoxin]-disulfide + H2O. Thiol-specific peroxidase that catalyzes the reduction of hydrogen peroxide and organic hydroperoxides to water and alcohols, respectively. Plays a role in cell protection against oxidative stress by detoxifying peroxides and as sensor of hydrogen peroxide-mediated signaling events. Might participate in the signaling cascades of growth factors and tumor necrosis factor-alpha by regulating the intracellular concentrations of H(2)O(2). Reduces an intramolecular disulfide bond in GDPD5 that gates the ability to GDPD5 to drive postmitotic motor neuron differentiation. This is Peroxiredoxin-1 (PRDX1) from Gallus gallus (Chicken).